Consider the following 460-residue polypeptide: Muscarinic acetylcholine receptor M1 (460 aa).

The Extracellular portion of the chain corresponds to 1 to 22 (MNTSAPPAVSPNITVLAPGKGP). N-linked (GlcNAc...) asparagine glycosylation is found at Asn2 and Asn12. Residues 23–48 (WQVAFIGITTGLLSLATVTGNLLVLI) form a helical membrane-spanning segment. Topologically, residues 49–62 (SFKVNTELKTVNNY) are cytoplasmic. The helical transmembrane segment at 63–84 (FLLSLACADLIIGTFSMNLYTT) threads the bilayer. At 85–95 (YLLMGHWALGT) the chain is on the extracellular side. Residues 96–121 (LACDLWLALDYVASNASVMNLLLISF) form a helical membrane-spanning segment. Cys98 and Cys178 are joined by a disulfide. Topologically, residues 122–142 (DRYFSVTRPLSYRAKRTPRRA) are cytoplasmic. A helical transmembrane segment spans residues 143 to 164 (ALMIGLAWLVSFVLWAPAILFW). The Extracellular segment spans residues 165-185 (QYLVGERTVLAGQCYIQFLSQ). The chain crosses the membrane as a helical span at residues 186–209 (PIITFGTAMAAFYLPVTVMCTLYW). Residues 210 to 366 (RIYRETENRA…LVKEKKAART (157 aa)) are Cytoplasmic-facing. 3 disordered regions span residues 225–256 (LQGS…ETPP), 274–296 (WKEE…GEEP), and 310–351 (EAQA…QLAK). At Thr230 the chain carries Phosphothreonine. A compositionally biased stretch (low complexity) spans 238–247 (SSSSERSQPG). Positions 328-343 (RPTRKGRERAGKGQKP) are enriched in basic residues. Residues 367–390 (LSAILLAFIVTWTPYNIMVLVSTF) traverse the membrane as a helical segment. The Extracellular portion of the chain corresponds to 391–397 (CKDCVPE). A helical membrane pass occupies residues 398-420 (TLWELGYWLCYVNSTINPMCYAL). Topologically, residues 421–460 (CNKAFRDTFRLLLLCRWDKRRWRKIPKRPGSVHRTPSRQC) are cytoplasmic. Thr428 carries the post-translational modification Phosphothreonine. Ser451 carries the post-translational modification Phosphoserine. At Thr455 the chain carries Phosphothreonine. Position 457 is a phosphoserine (Ser457).

This sequence belongs to the G-protein coupled receptor 1 family. Muscarinic acetylcholine receptor subfamily. CHRM1 sub-subfamily. In terms of assembly, interacts with GPRASP2. Interacts with TMEM147.

The protein resides in the cell membrane. Its subcellular location is the postsynaptic cell membrane. Its function is as follows. The muscarinic acetylcholine receptor mediates various cellular responses, including inhibition of adenylate cyclase, breakdown of phosphoinositides and modulation of potassium channels through the action of G proteins. Primary transducing effect is Pi turnover. This Sus scrofa (Pig) protein is Muscarinic acetylcholine receptor M1 (CHRM1).